A 185-amino-acid polypeptide reads, in one-letter code: Elongation factor P (185 aa).

This sequence belongs to the elongation factor P family.

It is found in the cytoplasm. It participates in protein biosynthesis; polypeptide chain elongation. Its function is as follows. Involved in peptide bond synthesis. Stimulates efficient translation and peptide-bond synthesis on native or reconstituted 70S ribosomes in vitro. Probably functions indirectly by altering the affinity of the ribosome for aminoacyl-tRNA, thus increasing their reactivity as acceptors for peptidyl transferase. The polypeptide is Elongation factor P (Thermotoga petrophila (strain ATCC BAA-488 / DSM 13995 / JCM 10881 / RKU-1)).